Reading from the N-terminus, the 264-residue chain is Type III pantothenate kinase (264 aa).

6 to 13 (DVRNTSIE) contributes to the ATP binding site. 109 to 112 (GADR) serves as a coordination point for substrate. Aspartate 111 serves as the catalytic Proton acceptor. K(+) is bound at residue aspartate 131. Threonine 134 is a binding site for ATP. Threonine 185 contacts substrate.

This sequence belongs to the type III pantothenate kinase family. As to quaternary structure, homodimer. It depends on NH4(+) as a cofactor. K(+) serves as cofactor.

It localises to the cytoplasm. It catalyses the reaction (R)-pantothenate + ATP = (R)-4'-phosphopantothenate + ADP + H(+). It participates in cofactor biosynthesis; coenzyme A biosynthesis; CoA from (R)-pantothenate: step 1/5. In terms of biological role, catalyzes the phosphorylation of pantothenate (Pan), the first step in CoA biosynthesis. This Nocardia farcinica (strain IFM 10152) protein is Type III pantothenate kinase.